A 575-amino-acid polypeptide reads, in one-letter code: Sulfite reductase [NADPH] hemoprotein beta-component (575 aa).

Residues cysteine 439, cysteine 445, cysteine 484, and cysteine 488 each contribute to the [4Fe-4S] cluster site. Cysteine 488 serves as a coordination point for siroheme.

It belongs to the nitrite and sulfite reductase 4Fe-4S domain family. Alpha(8)-beta(8). The alpha component is a flavoprotein, the beta component is a hemoprotein. It depends on siroheme as a cofactor. Requires [4Fe-4S] cluster as cofactor.

The enzyme catalyses hydrogen sulfide + 3 NADP(+) + 3 H2O = sulfite + 3 NADPH + 4 H(+). Its pathway is sulfur metabolism; hydrogen sulfide biosynthesis; hydrogen sulfide from sulfite (NADPH route): step 1/1. In terms of biological role, component of the sulfite reductase complex that catalyzes the 6-electron reduction of sulfite to sulfide. This is one of several activities required for the biosynthesis of L-cysteine from sulfate. The protein is Sulfite reductase [NADPH] hemoprotein beta-component of Blochmanniella pennsylvanica (strain BPEN).